A 129-amino-acid polypeptide reads, in one-letter code: Large ribosomal subunit protein bL20 (129 aa).

The segment covering 1–17 (MARVKRSVNAHKKRRSV) has biased composition (basic residues). A disordered region spans residues 1–29 (MARVKRSVNAHKKRRSVLKASKGYRGQRS).

The protein belongs to the bacterial ribosomal protein bL20 family.

In terms of biological role, binds directly to 23S ribosomal RNA and is necessary for the in vitro assembly process of the 50S ribosomal subunit. It is not involved in the protein synthesizing functions of that subunit. This chain is Large ribosomal subunit protein bL20, found in Mycobacterium ulcerans (strain Agy99).